Consider the following 635-residue polypeptide: Beta-mannosyltransferase 2 (635 aa).

Residues 1–6 (MRTRLN) lie on the Cytoplasmic side of the membrane. A helical transmembrane segment spans residues 7–27 (FLLLCIASVLSVIWIGVLLTW). Residues 28–635 (NDNNLGGISL…EKKEAEKKGK (608 aa)) are Extracellular-facing. The N-linked (GlcNAc...) asparagine glycan is linked to N484. Residues 512 to 635 (TRGEAERRRR…EKKEAEKKGK (124 aa)) adopt a coiled-coil conformation. Residues 517 to 635 (ERRRRVAEER…EKKEAEKKGK (119 aa)) form a disordered region.

This sequence belongs to the BMT family.

It is found in the membrane. Beta-mannosyltransferase involved in cell wall biosynthesis. Initiates the beta-mannosylation of core N-linked glycans. This chain is Beta-mannosyltransferase 2 (BMT2), found in Komagataella phaffii (strain ATCC 76273 / CBS 7435 / CECT 11047 / NRRL Y-11430 / Wegner 21-1) (Yeast).